We begin with the raw amino-acid sequence, 545 residues long: Chaperonin GroEL (545 aa).

ATP contacts are provided by residues 30–33 (TLGP), K51, 87–91 (DGTTT), G415, and D496.

It belongs to the chaperonin (HSP60) family. In terms of assembly, forms a cylinder of 14 subunits composed of two heptameric rings stacked back-to-back. Interacts with the co-chaperonin GroES.

The protein resides in the cytoplasm. The enzyme catalyses ATP + H2O + a folded polypeptide = ADP + phosphate + an unfolded polypeptide.. In terms of biological role, together with its co-chaperonin GroES, plays an essential role in assisting protein folding. The GroEL-GroES system forms a nano-cage that allows encapsulation of the non-native substrate proteins and provides a physical environment optimized to promote and accelerate protein folding. The sequence is that of Chaperonin GroEL from Chlorobaculum tepidum (strain ATCC 49652 / DSM 12025 / NBRC 103806 / TLS) (Chlorobium tepidum).